The sequence spans 215 residues: Pyrrolidone-carboxylate peptidase (215 aa).

Catalysis depends on residues glutamate 80, cysteine 143, and histidine 167.

Belongs to the peptidase C15 family. In terms of assembly, homotetramer.

The protein resides in the cytoplasm. The catalysed reaction is Release of an N-terminal pyroglutamyl group from a polypeptide, the second amino acid generally not being Pro.. In terms of biological role, removes 5-oxoproline from various penultimate amino acid residues except L-proline. The polypeptide is Pyrrolidone-carboxylate peptidase (Pectobacterium carotovorum subsp. carotovorum (strain PC1)).